The chain runs to 432 residues: MAIWLERASADFEQKFAAFLTTKREVSEDVNATVRDIINDVRHRGDAALAHYSQKFDGIDFTRVSMRVTADEIDAAFSAVDRAVIEALELAARRIEKHHARQMPKDDIYEDDIGVGLGSRWTAIEAVGLYVPGGTASYPSSVLMNAVPAKVAGVERIVMVVPANGGAVNPAVLAAARIAGVEEIYRIGGAQAVAALAYGTETIAPVAKIVGPGNAYVAAAKRQVFGTVGIDMIAGPSEVLVIADKDNDPDWLAADLLAQAEHDRGAQSILITDNADLGKAVGAAVERQLKLLSRSETAAASWADFGAIILVEKLTDAIPLANRIAAEHLELAVDDPDALMAHIRNAGAIFVGRHTPEVIGDYVGGSNHVLPTARSARFSSGLSVLDFVKRTSILRLGPEQLRQLAPAAITLAHSEGLDAHARSVSIRLNPES.

Residues Y130, Q191, and N214 each contribute to the NAD(+) site. Substrate is bound by residues S237, Q259, and H262. Zn(2+) contacts are provided by Q259 and H262. Residues E327 and H328 each act as proton acceptor in the active site. 4 residues coordinate substrate: H328, D361, E415, and H420. Zn(2+) is bound at residue D361. H420 provides a ligand contact to Zn(2+).

Belongs to the histidinol dehydrogenase family. Zn(2+) serves as cofactor.

The enzyme catalyses L-histidinol + 2 NAD(+) + H2O = L-histidine + 2 NADH + 3 H(+). It participates in amino-acid biosynthesis; L-histidine biosynthesis; L-histidine from 5-phospho-alpha-D-ribose 1-diphosphate: step 9/9. Catalyzes the sequential NAD-dependent oxidations of L-histidinol to L-histidinaldehyde and then to L-histidine. The sequence is that of Histidinol dehydrogenase from Agrobacterium fabrum (strain C58 / ATCC 33970) (Agrobacterium tumefaciens (strain C58)).